Reading from the N-terminus, the 431-residue chain is UPF0597 protein TDE_2144 (431 aa).

Belongs to the UPF0597 family.

This Treponema denticola (strain ATCC 35405 / DSM 14222 / CIP 103919 / JCM 8153 / KCTC 15104) protein is UPF0597 protein TDE_2144.